We begin with the raw amino-acid sequence, 223 residues long: Deoxyribose-phosphate aldolase (223 aa).

Catalysis depends on D91, which acts as the Proton donor/acceptor. K153 serves as the catalytic Schiff-base intermediate with acetaldehyde. Catalysis depends on K182, which acts as the Proton donor/acceptor.

This sequence belongs to the DeoC/FbaB aldolase family. DeoC type 1 subfamily.

The protein resides in the cytoplasm. The enzyme catalyses 2-deoxy-D-ribose 5-phosphate = D-glyceraldehyde 3-phosphate + acetaldehyde. The protein operates within carbohydrate degradation; 2-deoxy-D-ribose 1-phosphate degradation; D-glyceraldehyde 3-phosphate and acetaldehyde from 2-deoxy-alpha-D-ribose 1-phosphate: step 2/2. Catalyzes a reversible aldol reaction between acetaldehyde and D-glyceraldehyde 3-phosphate to generate 2-deoxy-D-ribose 5-phosphate. This is Deoxyribose-phosphate aldolase from Streptococcus pyogenes serotype M28 (strain MGAS6180).